Here is a 168-residue protein sequence, read N- to C-terminus: G/U mismatch-specific DNA glycosylase (168 aa).

Belongs to the uracil-DNA glycosylase (UDG) superfamily. TDG/mug family. Binds DNA as a monomer.

The protein resides in the cytoplasm. It catalyses the reaction Specifically hydrolyzes mismatched double-stranded DNA and polynucleotides, releasing free uracil.. Its function is as follows. Excises ethenocytosine and uracil, which can arise by alkylation or deamination of cytosine, respectively, from the corresponding mispairs with guanine in ds-DNA. It is capable of hydrolyzing the carbon-nitrogen bond between the sugar-phosphate backbone of the DNA and the mispaired base. The complementary strand guanine functions in substrate recognition. Required for DNA damage lesion repair in stationary-phase cells. This Cronobacter sakazakii (strain ATCC BAA-894) (Enterobacter sakazakii) protein is G/U mismatch-specific DNA glycosylase.